Reading from the N-terminus, the 270-residue chain is 3-methyl-2-oxobutanoate hydroxymethyltransferase (270 aa).

2 residues coordinate Mg(2+): aspartate 50 and aspartate 89. 3-methyl-2-oxobutanoate is bound by residues 50 to 51, aspartate 89, and lysine 118; that span reads DS. Position 120 (glutamate 120) interacts with Mg(2+). Glutamate 187 serves as the catalytic Proton acceptor.

It belongs to the PanB family. In terms of assembly, homodecamer; pentamer of dimers. Mg(2+) serves as cofactor.

The protein localises to the cytoplasm. The catalysed reaction is 3-methyl-2-oxobutanoate + (6R)-5,10-methylene-5,6,7,8-tetrahydrofolate + H2O = 2-dehydropantoate + (6S)-5,6,7,8-tetrahydrofolate. Its pathway is cofactor biosynthesis; (R)-pantothenate biosynthesis; (R)-pantoate from 3-methyl-2-oxobutanoate: step 1/2. Its function is as follows. Catalyzes the reversible reaction in which hydroxymethyl group from 5,10-methylenetetrahydrofolate is transferred onto alpha-ketoisovalerate to form ketopantoate. In Helicobacter pylori (strain G27), this protein is 3-methyl-2-oxobutanoate hydroxymethyltransferase.